A 357-amino-acid polypeptide reads, in one-letter code: N-acetyl-gamma-glutamyl-phosphate reductase (357 aa).

Cys160 is a catalytic residue.

Belongs to the NAGSA dehydrogenase family. Type 1 subfamily.

It is found in the cytoplasm. It catalyses the reaction N-acetyl-L-glutamate 5-semialdehyde + phosphate + NADP(+) = N-acetyl-L-glutamyl 5-phosphate + NADPH + H(+). It participates in amino-acid biosynthesis; L-arginine biosynthesis; N(2)-acetyl-L-ornithine from L-glutamate: step 3/4. Catalyzes the NADPH-dependent reduction of N-acetyl-5-glutamyl phosphate to yield N-acetyl-L-glutamate 5-semialdehyde. The sequence is that of N-acetyl-gamma-glutamyl-phosphate reductase from Parasynechococcus marenigrum (strain WH8102).